The sequence spans 303 residues: 34 kDa antigenic protein homolog (303 aa).

Helical transmembrane passes span 42 to 62, 77 to 97, 102 to 122, and 134 to 154; these read IAVA…MFTL, TGLP…ALVP, HVTV…SATF, and LWVV…ALLV. Low complexity-rich tracts occupy residues 194 to 207 and 215 to 255; these read QGAQ…SPGP and GYGS…HQGP. Positions 194 to 303 are disordered; it reads QGAQQAAGLQ…QSSSPGGAPV (110 aa). The span at 256–271 shows a compositional bias: pro residues; the sequence is STPPTGFPSFSPPPPV. Residues 274 to 286 are compositionally biased toward polar residues; that stretch reads GTGSQAGSAPVNY. The span at 287-303 shows a compositional bias: low complexity; the sequence is SNPSGGEQSSSPGGAPV.

This sequence to M.paratuberculosis 34 kDa antigenic protein.

It localises to the cell membrane. This chain is 34 kDa antigenic protein homolog, found in Mycobacterium bovis (strain ATCC BAA-935 / AF2122/97).